A 349-amino-acid polypeptide reads, in one-letter code: Homeobox protein engrailed (349 aa).

Disordered regions lie at residues 26 to 53, 146 to 210, 228 to 252, and 327 to 349; these read DGPS…SPLS, GKET…PLPP, PSSG…EKRP, and STIP…ARIE. 2 stretches are compositionally biased toward basic and acidic residues: residues 173–188 and 242–252; these read QMKK…RTES and DKAITPDEKRP. The segment at residues 249–308 is a DNA-binding region (homeobox); the sequence is EKRPRTAFTAEQLSRLKHEFNENRYLTERRRQDLARELGLHENQIKIWFQNNRAKLKKSS.

The protein belongs to the engrailed homeobox family.

Its subcellular location is the nucleus. The protein is Homeobox protein engrailed of Artemia franciscana (Brine shrimp).